The sequence spans 621 residues: Glutathione-regulated potassium-efflux system protein KefC (621 aa).

12 helical membrane passes run 9 to 29, 30 to 50, 54 to 74, 90 to 110, 114 to 134, 149 to 169, 178 to 198, 232 to 252, 270 to 290, 296 to 316, 326 to 346, and 359 to 379; these read ALIYLGAAALIVPIASVLGLG, SVLGYLIAGCIIGPWALRLVN, AILHFAEIGVVLMLVAMGLEL, GALQMVACGVLIGLFCMLLGL, VAELIGMTLALSSTAIAMQAM, FAVLLFQDIAAIPLVAMIPLL, LMAFALSALKVAAALALVVVL, LLLEEVGLSMAMGAFLAGVLL, GLLLGLFFIGVGMSIDFAPWS, IVILLVGFPAIKMLMLWLIAQ, RWFAVLLGQGSEFAFVVFGPA, and ALTLAVALSMATTPILLVLLT. The region spanning 399-518 is the RCK N-terminal domain; the sequence is QPRVIVAGFG…AGVEAPERET (120 aa). Residues 598 to 621 are disordered; that stretch reads GWQGTEEGRHTGDIADEPENKPSA.

The protein belongs to the monovalent cation:proton antiporter 2 (CPA2) transporter (TC 2.A.37) family. KefC subfamily. Homodimer. Interacts with the regulatory subunit KefF.

It localises to the cell inner membrane. In terms of biological role, pore-forming subunit of a potassium efflux system that confers protection against electrophiles. Catalyzes K(+)/H(+) antiport. This chain is Glutathione-regulated potassium-efflux system protein KefC, found in Klebsiella aerogenes (Enterobacter aerogenes).